Here is a 158-residue protein sequence, read N- to C-terminus: Transcription elongation factor GreA (158 aa).

It belongs to the GreA/GreB family.

Necessary for efficient RNA polymerase transcription elongation past template-encoded arresting sites. The arresting sites in DNA have the property of trapping a certain fraction of elongating RNA polymerases that pass through, resulting in locked ternary complexes. Cleavage of the nascent transcript by cleavage factors such as GreA or GreB allows the resumption of elongation from the new 3'terminus. GreA releases sequences of 2 to 3 nucleotides. The polypeptide is Transcription elongation factor GreA (Bacillus licheniformis (strain ATCC 14580 / DSM 13 / JCM 2505 / CCUG 7422 / NBRC 12200 / NCIMB 9375 / NCTC 10341 / NRRL NRS-1264 / Gibson 46)).